Consider the following 317-residue polypeptide: Melanocyte-stimulating hormone receptor (317 aa).

The Extracellular segment spans residues 1–37 (MPVQGSQRRLLGSLNSTPTATPKLGLAANQTGAWCLE). N-linked (GlcNAc...) asparagine glycosylation occurs at Asn-29. Residues 38-63 (VSIPDGLFLSLGLVSLVENVLVVAAI) form a helical membrane-spanning segment. Over 64–72 (AKNRNLHSP) the chain is Cytoplasmic. A helical transmembrane segment spans residues 73-93 (MYCFICCLALSDLLVSGSNML). Over 94-118 (ETAVILLLEAGALAARAAVVQQLDN) the chain is Extracellular. The chain crosses the membrane as a helical span at residues 119 to 140 (VIDVITCSSMLSSLCFLGAIAV). Residues 141–163 (DRYISIFYALRYHSIVTLPRAQR) lie on the Cytoplasmic side of the membrane. A helical membrane pass occupies residues 164-183 (VVAAIWVASVLFSTLFIAYY). Topologically, residues 184–191 (DHAAVLLC) are extracellular. A helical membrane pass occupies residues 192–211 (LVVFFLAMLVLMAVLYVHML). Residues 212-240 (ARACQHAQGIAQLHKRQRPAHQGFGLKGA) lie on the Cytoplasmic side of the membrane. Residues 241-266 (ATLTILLGIFFLCWGPFFLHLTLIVL) traverse the membrane as a helical segment. Over 267-279 (CPQHPTCSCIFKN) the chain is Extracellular. A helical transmembrane segment spans residues 280-300 (FNLFLALIICNAIIDPLIYAF). Residues 301–317 (RSQELRRTLKEVLLCSW) are Cytoplasmic-facing. Cys-315 carries S-palmitoyl cysteine lipidation.

It belongs to the G-protein coupled receptor 1 family. As to quaternary structure, interacts with MGRN1, but does not undergo MGRN1-mediated ubiquitination; this interaction competes with GNAS-binding and thus inhibits agonist-induced cAMP production. Interacts with OPN3; the interaction results in a decrease in MC1R-mediated cAMP signaling and ultimately a decrease in melanin production in melanocytes.

Its subcellular location is the cell membrane. In terms of biological role, receptor for MSH (alpha, beta and gamma) and ACTH. The activity of this receptor is mediated by G proteins which activate adenylate cyclase. Mediates melanogenesis, the production of eumelanin (black/brown) and phaeomelanin (red/yellow), via regulation of cAMP signaling in melanocytes. The chain is Melanocyte-stimulating hormone receptor (MC1R) from Colobus guereza (Mantled guereza).